A 618-amino-acid polypeptide reads, in one-letter code: F-box/LRR-repeat protein At3g58940 (618 aa).

The region spanning 1–47 is the F-box domain; that stretch reads MDRVSNLPEEVRCHILSFLPTKHAALTSVLSKSWLNLWKFETNLDID. LRR repeat units lie at residues 147–176, 196–223, 224–249, 282–313, 314–339, and 354–379; these read LKLR…NIDS, EVHM…SIHG, TGVE…NYSD, TLYL…GLKS, DEGR…IIEG, and CISR…GFRG. Residues 587–618 form a disordered region; the sequence is ATDSERAETSSNQEMTELGQATATYFPPREGE. Positions 595–609 are enriched in polar residues; that stretch reads TSSNQEMTELGQATA.

This is F-box/LRR-repeat protein At3g58940 from Arabidopsis thaliana (Mouse-ear cress).